Here is a 461-residue protein sequence, read N- to C-terminus: ATP synthase subunit beta 2 (461 aa).

151 to 158 (GGAGVGKT) lines the ATP pocket.

Belongs to the ATPase alpha/beta chains family. F-type ATPases have 2 components, CF(1) - the catalytic core - and CF(0) - the membrane proton channel. CF(1) has five subunits: alpha(3), beta(3), gamma(1), delta(1), epsilon(1). CF(0) has three main subunits: a(1), b(2) and c(9-12). The alpha and beta chains form an alternating ring which encloses part of the gamma chain. CF(1) is attached to CF(0) by a central stalk formed by the gamma and epsilon chains, while a peripheral stalk is formed by the delta and b chains.

The protein localises to the cell inner membrane. The catalysed reaction is ATP + H2O + 4 H(+)(in) = ADP + phosphate + 5 H(+)(out). Its function is as follows. Produces ATP from ADP in the presence of a proton gradient across the membrane. The catalytic sites are hosted primarily by the beta subunits. This chain is ATP synthase subunit beta 2, found in Pseudoalteromonas atlantica (strain T6c / ATCC BAA-1087).